We begin with the raw amino-acid sequence, 377 residues long: Flagellar P-ring protein (377 aa).

The signal sequence occupies residues 1-30 (MLARFLSSLLKASVTALAVVVAFGFAANFA).

It belongs to the FlgI family. In terms of assembly, the basal body constitutes a major portion of the flagellar organelle and consists of four rings (L,P,S, and M) mounted on a central rod.

The protein resides in the periplasm. Its subcellular location is the bacterial flagellum basal body. Its function is as follows. Assembles around the rod to form the L-ring and probably protects the motor/basal body from shearing forces during rotation. The protein is Flagellar P-ring protein of Cupriavidus pinatubonensis (strain JMP 134 / LMG 1197) (Cupriavidus necator (strain JMP 134)).